The sequence spans 69 residues: DNA-directed RNA polymerase subunit omega (69 aa).

Belongs to the RNA polymerase subunit omega family. In terms of assembly, the RNAP catalytic core consists of 2 alpha, 1 beta, 1 beta' and 1 omega subunit. When a sigma factor is associated with the core the holoenzyme is formed, which can initiate transcription.

It carries out the reaction RNA(n) + a ribonucleoside 5'-triphosphate = RNA(n+1) + diphosphate. Its function is as follows. Promotes RNA polymerase assembly. Latches the N- and C-terminal regions of the beta' subunit thereby facilitating its interaction with the beta and alpha subunits. In Symbiobacterium thermophilum (strain DSM 24528 / JCM 14929 / IAM 14863 / T), this protein is DNA-directed RNA polymerase subunit omega.